Reading from the N-terminus, the 600-residue chain is Elongation factor 4 (600 aa).

The 184-residue stretch at 4–187 (KYIRNFSIVA…AIIEQIPPPL (184 aa)) folds into the tr-type G domain. Residues 16 to 21 (DHGKST) and 134 to 137 (NKID) contribute to the GTP site.

Belongs to the TRAFAC class translation factor GTPase superfamily. Classic translation factor GTPase family. LepA subfamily.

The protein resides in the cell membrane. The enzyme catalyses GTP + H2O = GDP + phosphate + H(+). Functionally, required for accurate and efficient protein synthesis under certain stress conditions. May act as a fidelity factor of the translation reaction, by catalyzing a one-codon backward translocation of tRNAs on improperly translocated ribosomes. Back-translocation proceeds from a post-translocation (POST) complex to a pre-translocation (PRE) complex, thus giving elongation factor G a second chance to translocate the tRNAs correctly. Binds to ribosomes in a GTP-dependent manner. This Malacoplasma penetrans (strain HF-2) (Mycoplasma penetrans) protein is Elongation factor 4.